Consider the following 288-residue polypeptide: Quinate/shikimate dehydrogenase (288 aa).

Positions 71 and 107 each coordinate substrate. NAD(+) is bound by residues 132–135 (AGGA), 155–158 (NRKD), K205, 232–235 (CVYN), and G255.

It belongs to the shikimate dehydrogenase family. Homodimer.

The catalysed reaction is L-quinate + NAD(+) = 3-dehydroquinate + NADH + H(+). It catalyses the reaction L-quinate + NADP(+) = 3-dehydroquinate + NADPH + H(+). The enzyme catalyses shikimate + NADP(+) = 3-dehydroshikimate + NADPH + H(+). It carries out the reaction shikimate + NAD(+) = 3-dehydroshikimate + NADH + H(+). It functions in the pathway metabolic intermediate biosynthesis; chorismate biosynthesis; chorismate from D-erythrose 4-phosphate and phosphoenolpyruvate: step 4/7. Its function is as follows. The actual biological function of YdiB remains unclear, nor is it known whether 3-dehydroshikimate or quinate represents the natural substrate. Catalyzes the reversible NAD-dependent reduction of both 3-dehydroshikimate (DHSA) and 3-dehydroquinate to yield shikimate (SA) and quinate, respectively. It can use both NAD or NADP for catalysis, however it has higher catalytic efficiency with NAD. This chain is Quinate/shikimate dehydrogenase, found in Salmonella agona (strain SL483).